The following is a 165-amino-acid chain: Large ribosomal subunit protein uL11 (165 aa).

S38 is modified (phosphoserine). Residue K40 forms a Glycyl lysine isopeptide (Lys-Gly) (interchain with G-Cter in SUMO2) linkage. K48 participates in a covalent cross-link: Glycyl lysine isopeptide (Lys-Gly) (interchain with G-Cter in ubiquitin). Position 54 is an N6-acetyllysine (K54). A Glycyl lysine isopeptide (Lys-Gly) (interchain with G-Cter in ubiquitin) cross-link involves residue K83. Phosphoserine is present on S165.

It belongs to the universal ribosomal protein uL11 family. In terms of assembly, component of the large ribosomal subunit. Mature ribosomes consist of a small (40S) and a large (60S) subunit. The 40S subunit contains about 33 different proteins and 1 molecule of RNA (18S). The 60S subunit contains about 49 different proteins and 3 molecules of RNA (28S, 5.8S and 5S). Ubiquitinated at Lys-48 and Lys-83 by RNF14 and RNF25 in response to ribosome collisions (ribosome stalling).

The protein localises to the cytoplasm. Functionally, component of the large ribosomal subunit. The ribosome is a large ribonucleoprotein complex responsible for the synthesis of proteins in the cell. Binds directly to 26S ribosomal RNA. The sequence is that of Large ribosomal subunit protein uL11 (RPL12) from Bos taurus (Bovine).